The sequence spans 469 residues: Glutamine synthetase (469 aa).

The 85-residue stretch at 13–97 folds into the GS beta-grasp domain; it reads KEVRYVDLRF…LRCDIVEPAT (85 aa). Residues 105–469 enclose the GS catalytic domain; sequence PRSIAKRAEA…PVEFDMYYSL (365 aa). Mg(2+)-binding residues include Glu130 and Glu132. Residue Glu208 participates in ATP binding. Residues Glu213 and Glu221 each coordinate Mg(2+). L-glutamate contacts are provided by residues 265-266 and Gly266; that span reads NG. His270 serves as a coordination point for Mg(2+). ATP contacts are provided by residues 272–274 and Ser274; that span reads HQS. Arg322, Glu328, and Arg340 together coordinate L-glutamate. ATP-binding residues include Arg340, Arg345, and Lys353. Glu358 provides a ligand contact to Mg(2+). Arg360 is an L-glutamate binding site. The residue at position 398 (Tyr398) is an O-AMP-tyrosine.

It belongs to the glutamine synthetase family. In terms of assembly, oligomer of 12 subunits arranged in the form of two hexameric ring. Mg(2+) serves as cofactor.

Its subcellular location is the cytoplasm. The catalysed reaction is L-glutamate + NH4(+) + ATP = L-glutamine + ADP + phosphate + H(+). With respect to regulation, the activity of this enzyme could be controlled by adenylation under conditions of abundant glutamine. Its function is as follows. Catalyzes the ATP-dependent biosynthesis of glutamine from glutamate and ammonia. This is Glutamine synthetase from Methylococcus capsulatus (strain ATCC 33009 / NCIMB 11132 / Bath).